Consider the following 231-residue polypeptide: Putative N-acetylmannosamine-6-phosphate 2-epimerase (231 aa).

It belongs to the NanE family.

The catalysed reaction is an N-acyl-D-glucosamine 6-phosphate = an N-acyl-D-mannosamine 6-phosphate. Its pathway is amino-sugar metabolism; N-acetylneuraminate degradation; D-fructose 6-phosphate from N-acetylneuraminate: step 3/5. Functionally, converts N-acetylmannosamine-6-phosphate (ManNAc-6-P) to N-acetylglucosamine-6-phosphate (GlcNAc-6-P). The protein is Putative N-acetylmannosamine-6-phosphate 2-epimerase of Listeria monocytogenes serotype 4b (strain CLIP80459).